A 937-amino-acid chain; its full sequence is Isoleucine--tRNA ligase (937 aa).

Positions 58-68 (PYANGDIHIGH) match the 'HIGH' region motif. An L-isoleucyl-5'-AMP-binding site is contributed by E561. The 'KMSKS' region signature appears at 602-606 (KMSKS). An ATP-binding site is contributed by K605. Residues C900, C903, C920, and C923 each coordinate Zn(2+).

This sequence belongs to the class-I aminoacyl-tRNA synthetase family. IleS type 1 subfamily. In terms of assembly, monomer. Zn(2+) serves as cofactor.

It localises to the cytoplasm. The enzyme catalyses tRNA(Ile) + L-isoleucine + ATP = L-isoleucyl-tRNA(Ile) + AMP + diphosphate. In terms of biological role, catalyzes the attachment of isoleucine to tRNA(Ile). As IleRS can inadvertently accommodate and process structurally similar amino acids such as valine, to avoid such errors it has two additional distinct tRNA(Ile)-dependent editing activities. One activity is designated as 'pretransfer' editing and involves the hydrolysis of activated Val-AMP. The other activity is designated 'posttransfer' editing and involves deacylation of mischarged Val-tRNA(Ile). This chain is Isoleucine--tRNA ligase, found in Alcanivorax borkumensis (strain ATCC 700651 / DSM 11573 / NCIMB 13689 / SK2).